We begin with the raw amino-acid sequence, 1465 residues long: DNA polymerase III polC-type (1465 aa).

One can recognise an Exonuclease domain in the interval tyrosine 427–leucine 583.

It belongs to the DNA polymerase type-C family. PolC subfamily.

The protein localises to the cytoplasm. It carries out the reaction DNA(n) + a 2'-deoxyribonucleoside 5'-triphosphate = DNA(n+1) + diphosphate. In terms of biological role, required for replicative DNA synthesis. This DNA polymerase also exhibits 3' to 5' exonuclease activity. The protein is DNA polymerase III polC-type of Streptococcus pyogenes serotype M3 (strain ATCC BAA-595 / MGAS315).